A 231-amino-acid chain; its full sequence is Transmembrane gamma-carboxyglutamic acid protein 3 (231 aa).

A propeptide spanning residues 1-19 (MAVFLEAKNAHAVLKRFPR) is cleaved from the precursor. The region spanning 20–65 (ANEFLEELRQGTIERECMEEICSYEEVKEVFENKEKTMEFWKGYPN) is the Gla domain. Residues 20–78 (ANEFLEELRQGTIERECMEEICSYEEVKEVFENKEKTMEFWKGYPNAVYSVRDPSQSSD) are Extracellular-facing. Glu-22, Glu-25, Glu-26, Glu-33, Glu-35, Glu-38, Glu-39, Glu-44, Glu-45, Glu-48, Glu-51, Glu-54, and Glu-58 each carry 4-carboxyglutamate. A disulfide bridge connects residues Cys-36 and Cys-41. A helical membrane pass occupies residues 79–101 (AMYVVVPLLGVVLLIVIALFIIW). Residues 102 to 231 (RCQLQKATRH…IVAASPSADK (130 aa)) lie on the Cytoplasmic side of the membrane. Disordered regions lie at residues 140–165 (HSQG…SRGG) and 184–231 (RLSS…SADK). Polar residues predominate over residues 201–212 (QEGSSEEASVSY).

Gla residues are produced after subsequent post-translational modifications of glutamate by a vitamin K-dependent gamma-carboxylase.

The protein localises to the membrane. This Mus musculus (Mouse) protein is Transmembrane gamma-carboxyglutamic acid protein 3 (Prrg3).